Consider the following 545-residue polypeptide: Methionine--tRNA ligase (545 aa).

Residues 12–22 (PYANGSLHIGH) carry the 'HIGH' region motif. The Zn(2+) site is built by Cys143, Cys146, Cys156, and Cys159. The 'KMSKS' region motif lies at 329-333 (KLSKS). Lys332 lines the ATP pocket.

It belongs to the class-I aminoacyl-tRNA synthetase family. MetG type 1 subfamily. In terms of assembly, monomer. Zn(2+) serves as cofactor.

The protein localises to the cytoplasm. It catalyses the reaction tRNA(Met) + L-methionine + ATP = L-methionyl-tRNA(Met) + AMP + diphosphate. Functionally, is required not only for elongation of protein synthesis but also for the initiation of all mRNA translation through initiator tRNA(fMet) aminoacylation. The sequence is that of Methionine--tRNA ligase (metG) from Buchnera aphidicola subsp. Baizongia pistaciae (strain Bp).